The following is a 209-amino-acid chain: Cytochrome bo(3) ubiquinol oxidase subunit 3 (209 aa).

Residues 1 to 29 (MSTAVLNKHLADAHEVGHDHDHAHDSGGN) lie on the Cytoplasmic side of the membrane. The chain crosses the membrane as a helical span at residues 30-50 (TVFGFWLYLMTDCVLFASVFA). Residues 51–72 (TYAVLVHHTAGGPSGKDIFELP) are Periplasmic-facing. The helical transmembrane segment at 73-93 (YVLVETAILLVSSCTYGLAML) threads the bilayer. The Cytoplasmic portion of the chain corresponds to 94–102 (SAHKGAKGQ). Residues 103–123 (AIAWLGVTFLLGAAFIGMEIN) traverse the membrane as a helical segment. The Periplasmic portion of the chain corresponds to 124 to 143 (EFHHLIAEGFGPSRSAFLSS). Residues 144-164 (FFTLVGMHGLHVSAGLLWMLV) form a helical membrane-spanning segment. Over 165–186 (LMAQIWTRGLTAQNNTRMMCLS) the chain is Cytoplasmic. A helical transmembrane segment spans residues 187–207 (LFWHFLDIVWICVFTVVYLMG). The Periplasmic segment spans residues 208–209 (AL).

It belongs to the cytochrome c oxidase subunit 3 family. As to quaternary structure, heterooctamer of two A chains, two B chains, two C chains and two D chains.

Its subcellular location is the cell inner membrane. Cytochrome bo(3) ubiquinol terminal oxidase is the component of the aerobic respiratory chain of E.coli that predominates when cells are grown at high aeration. Has proton pump activity across the membrane in addition to electron transfer, pumping 2 protons/electron. This Pseudomonas aeruginosa (strain ATCC 15692 / DSM 22644 / CIP 104116 / JCM 14847 / LMG 12228 / 1C / PRS 101 / PAO1) protein is Cytochrome bo(3) ubiquinol oxidase subunit 3 (cyoC).